The primary structure comprises 251 residues: Gamma-gliadin (251 aa).

Residues 1–19 form the signal peptide; that stretch reads MKTLLILTILAMAITIGTA. The interval 26 to 143 is disordered; it reads SSQVQWPQQQ…QQSFPQQQPP (118 aa). The segment covering 42-81 has biased composition (low complexity); that stretch reads QPFSQQPQQTFPQPQQTFPHQPQQQFPQPQQPQQQFLQPQ. Positions 82–99 are enriched in pro residues; sequence QPFPQQPQQPYPQQPQQP. Residues 100 to 139 are compositionally biased toward low complexity; that stretch reads FPQTQQPQQLFPQSQQPQQQFSQPQQQFPQPQQPQQSFPQ.

It belongs to the gliadin/glutenin family.

In terms of biological role, gliadin is the major seed storage protein in wheat. In Triticum aestivum (Wheat), this protein is Gamma-gliadin.